We begin with the raw amino-acid sequence, 354 residues long: Membrane progestin receptor alpha-B (354 aa).

Topologically, residues M1–S76 are cytoplasmic. Residues V77–S97 traverse the membrane as a helical segment. The Extracellular portion of the chain corresponds to E98 to P110. The chain crosses the membrane as a helical span at residues M111 to L131. Over S132–T141 the chain is Cytoplasmic. The helical transmembrane segment at F142–F162 threads the bilayer. The Extracellular portion of the chain corresponds to Y163–R175. Residues T176–G196 traverse the membrane as a helical segment. The Cytoplasmic segment spans residues K197–Q244. Residues A245 to Y265 traverse the membrane as a helical segment. Residues P266–D277 are Extracellular-facing. Residues F278–I298 form a helical membrane-spanning segment. At E299 to D318 the chain is on the cytoplasmic side. The chain crosses the membrane as a helical span at residues L319–F339. Topologically, residues Y340–E354 are extracellular.

It belongs to the ADIPOR family.

It is found in the cell membrane. Functionally, steroid membrane receptor. Signals upon progestin binding, resulting in rapid activation of MAPK and down-regulation of adenylyl cyclase activity. Interacts with steroids with varying degrees of affinity, showing specificity for activation by the maturation-inducing steroid (MIS) 4-pregnen-17,20beta-diol-3-one (17,20beta-DHP). Capable of mediating progestin-induced oocyte maturation. This Danio rerio (Zebrafish) protein is Membrane progestin receptor alpha-B (paqr7b).